The following is a 700-amino-acid chain: uncharacterized protein (700 aa).

Positions 307, 310, 314, and 558 each coordinate [4Fe-4S] cluster.

This sequence belongs to the AOR/FOR family. [4Fe-4S] cluster serves as cofactor. It depends on Mo-molybdopterin as a cofactor. Requires tungstopterin as cofactor.

This is an uncharacterized protein from Escherichia coli (strain K12).